A 420-amino-acid polypeptide reads, in one-letter code: Small ribosomal subunit protein mS75 (420 aa).

A mitochondrion-targeting transit peptide spans 1–11 (MYNLSRIIYRF). Disordered regions lie at residues 99–120 (RQKN…DVMS) and 390–420 (RYSP…GKQT). The span at 102 to 114 (NAANPSSDNTPSD) shows a compositional bias: polar residues. A compositionally biased stretch (basic residues) spans 396 to 409 (QKRRSKRKQKRKER).

As to quaternary structure, component of the mitochondrial ribosome small subunit. As to expression, expressed at high levels in reproductive organs and, at lower levels, ubiquitously.

The protein localises to the mitochondrion. Functionally, essential for fertility (male and female gametophyte functions and development). Required for the integrity of female gametic mitochondria. Modulates male gametophyte functions, including pollen tube growth and style penetration. Involved in mitochondrial-driven cell-to-cell communication in embryo sacs during female gametes maturation (including embryogenesis initiation and endosperm development), especially for reciprocal signaling between central and egg cells which regulates reciprocal development. This chain is Small ribosomal subunit protein mS75, found in Arabidopsis thaliana (Mouse-ear cress).